The chain runs to 306 residues: Pantothenate kinase (306 aa).

ATP is bound at residue 90–97 (GSVAVGKS).

The protein belongs to the prokaryotic pantothenate kinase family.

The protein resides in the cytoplasm. It catalyses the reaction (R)-pantothenate + ATP = (R)-4'-phosphopantothenate + ADP + H(+). Its pathway is cofactor biosynthesis; coenzyme A biosynthesis; CoA from (R)-pantothenate: step 1/5. This is Pantothenate kinase from Lactococcus lactis subsp. cremoris (strain MG1363).